The following is a 396-amino-acid chain: Phospholipase A1-II 4 (396 aa).

S221 acts as the Acyl-ester intermediate in catalysis. Residues S221, D282, and H319 each act as charge relay system in the active site.

This sequence belongs to the AB hydrolase superfamily. Lipase family.

The protein resides in the cytoplasm. Its function is as follows. Acylhydrolase that catalyzes the hydrolysis of phospholipids at the sn-1 position. This chain is Phospholipase A1-II 4, found in Oryza sativa subsp. japonica (Rice).